The chain runs to 748 residues: Far upstream element-binding protein 2 (748 aa).

Residues 1 to 78 form a disordered region; that stretch reads MSDYNTGGPP…GIRKDAFADA (78 aa). At serine 2 the chain carries N-acetylserine. Residues 8–17 show a composition bias toward pro residues; that stretch reads GPPPGPPPPA. Gly residues-rich tracts occupy residues 18–28 and 36–69; these read GGGGGAAGAGG and GAGDRGGGGPGGGGPGGGGASGGPSQPPGGGGPG. Arginine 40 carries the omega-N-methylarginine modification. Lysine 88 bears the N6-acetyllysine mark. The segment at 90 to 148 is disordered; that stretch reads GGDAATTVNNNTPDFGFGGQKRQLEDGDQPDSKKLASQGDSIGSQLGPIHPPPRTSMTE. Phosphothreonine is present on threonine 101. Residues 111 to 123 are compositionally biased toward basic and acidic residues; the sequence is RQLEDGDQPDSKK. Lysine 122 is covalently cross-linked (Glycyl lysine isopeptide (Lys-Gly) (interchain with G-Cter in SUMO1); alternate). Lysine 122 participates in a covalent cross-link: Glycyl lysine isopeptide (Lys-Gly) (interchain with G-Cter in SUMO2); alternate. Residues serine 126, serine 130, serine 182, serine 185, serine 194, and serine 275 each carry the phosphoserine modification. 3 consecutive KH domains span residues 145–209, 234–300, and 323–387; these read SMTE…KMML, GTVQ…CEMV, and GGGI…ARII. Positions 394–422 are disordered; that stretch reads LRSGPPGPPGAPGMPPGGRGRGRGQGNWG. The span at 398–408 shows a compositional bias: pro residues; the sequence is PPGPPGAPGMP. Positions 409 to 422 are enriched in gly residues; that stretch reads PGGRGRGRGQGNWG. 4 positions are modified to omega-N-methylarginine: arginine 412, arginine 414, arginine 416, and arginine 443. The region spanning 425–492 is the KH 4 domain; it reads GGEMTFSIPT…QQIDHAKQLI (68 aa). A Phosphoserine modification is found at serine 481. The tract at residues 498–570 is disordered; the sequence is GPLCPVGPGP…HDPNKAAAAA (73 aa). 2 stretches are compositionally biased toward pro residues: residues 502–521 and 529–543; these read PVGPGPGGPGPAGPMGPFNP and PGAPPHAGGPPPHQY. Copy 1 of the repeat occupies 572-583; it reads DPNAAWAAYYSH. The interval 572–685 is 4 X 12 AA imperfect repeats; the sequence is DPNAAWAAYY…SAAWAEYYRQ (114 aa). The span at 588-614 shows a compositional bias: pro residues; the sequence is PPGPVPGPAPAPAAPPAQGEPPQPPPT. 3 disordered regions span residues 588–650, 659–678, and 689–735; these read PPGP…KAWE, VATGGGPGAPPGSQPDYSAA, and YYGQ…PALV. A run of 3 repeats spans residues 618-629, 644-655, and 674-685.

It belongs to the KHSRP family. In terms of assembly, part of a ternary complex containing FUBP2, PTBP1, PTBP2 and HNRPH1. Interacts with PARN. Interacts with PQBP1.

The protein localises to the nucleus. Its subcellular location is the cytoplasm. Binds to the dendritic targeting element and may play a role in mRNA trafficking. Part of a ternary complex that binds to the downstream control sequence (DCS) of the pre-mRNA. Mediates exon inclusion in transcripts that are subject to tissue-specific alternative splicing. May interact with single-stranded DNA from the far-upstream element (FUSE). May activate gene expression. Also involved in degradation of inherently unstable mRNAs that contain AU-rich elements (AREs) in their 3'-UTR, possibly by recruiting degradation machinery to ARE-containing mRNAs. The chain is Far upstream element-binding protein 2 (Khsrp) from Mus musculus (Mouse).